A 104-amino-acid polypeptide reads, in one-letter code: L-rhamnose mutarotase (104 aa).

Tyrosine 18 is a binding site for substrate. Residue histidine 22 is the Proton donor of the active site. Substrate contacts are provided by residues tyrosine 41 and 76–77 (WW).

Belongs to the rhamnose mutarotase family. In terms of assembly, homodimer.

The protein resides in the cytoplasm. It carries out the reaction alpha-L-rhamnose = beta-L-rhamnose. The protein operates within carbohydrate metabolism; L-rhamnose metabolism. Functionally, involved in the anomeric conversion of L-rhamnose. This is L-rhamnose mutarotase from Lactiplantibacillus plantarum (strain ATCC BAA-793 / NCIMB 8826 / WCFS1) (Lactobacillus plantarum).